Consider the following 527-residue polypeptide: Baicalin-beta-D-glucuronidase (527 aa).

The signal sequence occupies residues M1–G25. Catalysis depends on E212, which acts as the Proton donor. E329 functions as the Nucleophile in the catalytic mechanism.

It belongs to the glycosyl hydrolase 79 family. As to quaternary structure, homotetramer.

It carries out the reaction baicalin + H2O = baicalein + D-glucuronate + H(+). Its function is as follows. Beta-glucuronidase involved in the initiation of H(2)O(2) metabolism via the production of baicalein. Unable to use glycyrrhizin, gypsogenin-3-O-D-glucuronide, luteolin-7-O-D-glucoside and apigenin-7-O-D-glucoside as substrates. This chain is Baicalin-beta-D-glucuronidase (SGUS), found in Scutellaria baicalensis (Baical skullcap).